We begin with the raw amino-acid sequence, 484 residues long: Cobyric acid synthase (484 aa).

Residues 251-438 (ALKIAVPVLP…LHGLFASDAY (188 aa)) form the GATase cobBQ-type domain. Cys333 functions as the Nucleophile in the catalytic mechanism. His430 is an active-site residue.

Belongs to the CobB/CobQ family. CobQ subfamily.

The protein operates within cofactor biosynthesis; adenosylcobalamin biosynthesis. Its function is as follows. Catalyzes amidations at positions B, D, E, and G on adenosylcobyrinic A,C-diamide. NH(2) groups are provided by glutamine, and one molecule of ATP is hydrogenolyzed for each amidation. The polypeptide is Cobyric acid synthase (Rhizobium etli (strain CIAT 652)).